A 258-amino-acid chain; its full sequence is Regulatory protein RecX (258 aa).

Belongs to the RecX family.

It is found in the cytoplasm. Modulates RecA activity. This chain is Regulatory protein RecX, found in Streptococcus equi subsp. equi (strain 4047).